Here is a 185-residue protein sequence, read N- to C-terminus: Ubiquitin-conjugating enzyme E2 2 (185 aa).

Residues 4 to 150 form the UBC core domain; the sequence is PSKKRLIRDF…VKATVEASWL (147 aa). Catalysis depends on C88, which acts as the Glycyl thioester intermediate. Residues 149-173 are compositionally biased toward acidic residues; the sequence is WLDDGEMPESIEEDDEAEAEAEAEA. Residues 149-185 are disordered; sequence WLDDGEMPESIEEDDEAEAEAEAEATVDRSAPQTASA.

The protein belongs to the ubiquitin-conjugating enzyme family.

It is found in the cytoplasm. The protein resides in the nucleus. The catalysed reaction is S-ubiquitinyl-[E1 ubiquitin-activating enzyme]-L-cysteine + [E2 ubiquitin-conjugating enzyme]-L-cysteine = [E1 ubiquitin-activating enzyme]-L-cysteine + S-ubiquitinyl-[E2 ubiquitin-conjugating enzyme]-L-cysteine.. Its pathway is protein modification; protein ubiquitination. Catalyzes the covalent attachment of ubiquitin to other proteins. Plays a role in transcription regulation by catalyzing the monoubiquitination of histone H2B to form H2BK123ub1. H2BK123ub1 gives a specific tag for epigenetic transcriptional activation and is also a prerequisite for H3K4me and H3K79me formation. Also involved in postreplication repair of UV-damaged DNA, in N-end rule-dependent protein degradation and in sporulation. In Mycosarcoma maydis (Corn smut fungus), this protein is Ubiquitin-conjugating enzyme E2 2 (UBC2).